The chain runs to 346 residues: tRNA N6-adenosine threonylcarbamoyltransferase (346 aa).

Residues His-109, His-113, and Tyr-135 each contribute to the Fe cation site. Residues 135–139, Asp-167, Gly-180, Glu-184, and Asn-263 contribute to the substrate site; that span reads YVSGG. Asp-291 contacts Fe cation.

Belongs to the KAE1 / TsaD family. As to quaternary structure, monomer. Component of the KEOPS complex that consists of Kae1, Bud32, Cgi121 and Pcc1; the whole complex dimerizes. The cofactor is Fe(2+).

Its subcellular location is the cytoplasm. It carries out the reaction L-threonylcarbamoyladenylate + adenosine(37) in tRNA = N(6)-L-threonylcarbamoyladenosine(37) in tRNA + AMP + H(+). Functionally, required for the formation of a threonylcarbamoyl group on adenosine at position 37 (t(6)A37) in tRNAs that read codons beginning with adenine. Is a component of the KEOPS complex that is probably involved in the transfer of the threonylcarbamoyl moiety of threonylcarbamoyl-AMP (TC-AMP) to the N6 group of A37. Kae1 likely plays a direct catalytic role in this reaction, but requires other protein(s) of the complex to fulfill this activity. This chain is tRNA N6-adenosine threonylcarbamoyltransferase, found in Methanopyrus kandleri (strain AV19 / DSM 6324 / JCM 9639 / NBRC 100938).